The primary structure comprises 285 residues: Acetyl-coenzyme A carboxylase carboxyl transferase subunit beta (285 aa).

The region spanning 22–285 (LWTKCEACGA…HPGVAYAPGV (264 aa)) is the CoA carboxyltransferase N-terminal domain. Zn(2+) contacts are provided by C26, C29, C45, and C48. A C4-type zinc finger spans residues 26–48 (CEACGAQIYKKEFQENLHVCPKC).

The protein belongs to the AccD/PCCB family. Acetyl-CoA carboxylase is a heterohexamer composed of biotin carboxyl carrier protein (AccB), biotin carboxylase (AccC) and two subunits each of ACCase subunit alpha (AccA) and ACCase subunit beta (AccD). It depends on Zn(2+) as a cofactor.

The protein resides in the cytoplasm. The enzyme catalyses N(6)-carboxybiotinyl-L-lysyl-[protein] + acetyl-CoA = N(6)-biotinyl-L-lysyl-[protein] + malonyl-CoA. It functions in the pathway lipid metabolism; malonyl-CoA biosynthesis; malonyl-CoA from acetyl-CoA: step 1/1. Functionally, component of the acetyl coenzyme A carboxylase (ACC) complex. Biotin carboxylase (BC) catalyzes the carboxylation of biotin on its carrier protein (BCCP) and then the CO(2) group is transferred by the transcarboxylase to acetyl-CoA to form malonyl-CoA. The sequence is that of Acetyl-coenzyme A carboxylase carboxyl transferase subunit beta from Thermus thermophilus (strain ATCC BAA-163 / DSM 7039 / HB27).